A 72-amino-acid polypeptide reads, in one-letter code: uncharacterized protein (72 aa).

This sequence belongs to the asfivirus I73R family.

Its subcellular location is the virion. This is an uncharacterized protein from African swine fever virus (isolate Warthog/Namibia/Wart80/1980) (ASFV).